The primary structure comprises 2705 residues: Teneurin-1 (2705 aa).

Disordered stretches follow at residues methionine 1–aspartate 73 and cysteine 135–serine 222. In terms of domain architecture, Teneurin N-terminal spans methionine 1–cysteine 299. At methionine 1 to threonine 305 the chain is on the cytoplasmic side. A compositionally biased stretch (basic and acidic residues) spans aspartate 32–leucine 46. The short motif at arginine 62 to lysine 65 is the Nuclear localization signal (NLS) element. A compositionally biased stretch (polar residues) spans cysteine 135 to threonine 147. Positions aspartate 148 to glycine 157 are enriched in basic and acidic residues. The span at proline 173–histidine 182 shows a compositional bias: pro residues. The short motif at proline 271–arginine 278 is the Required for interaction with SORBS1 (Ten-1 ICD form) element. Residues alanine 306 to leucine 326 form a helical membrane-spanning segment. At threonine 327 to arginine 2705 the chain is on the extracellular side. Asparagine 414 carries an N-linked (GlcNAc...) asparagine glycan. EGF-like domains follow at residues valine 509–alanine 540, lysine 541–valine 572, proline 573–glutamate 605, glutamate 606–threonine 638, serine 639–serine 672, threonine 673–cysteine 702, glutamate 703–threonine 734, and isoleucine 735–asparagine 769. Intrachain disulfides connect cysteine 513–cysteine 523, cysteine 517–cysteine 528, cysteine 530–cysteine 539, cysteine 548–cysteine 559, cysteine 561–cysteine 570, cysteine 577–cysteine 588, cysteine 582–cysteine 593, cysteine 595–cysteine 604, cysteine 609–cysteine 620, cysteine 614–cysteine 625, cysteine 627–cysteine 636, cysteine 647–cysteine 660, cysteine 662–cysteine 671, cysteine 676–cysteine 686, cysteine 680–cysteine 691, cysteine 693–cysteine 702, cysteine 707–cysteine 717, cysteine 711–cysteine 722, cysteine 724–cysteine 733, cysteine 738–cysteine 748, cysteine 742–cysteine 757, and cysteine 759–cysteine 768. Asparagine 878 and asparagine 1057 each carry an N-linked (GlcNAc...) asparagine glycan. 5 NHL repeats span residues leucine 1167 to isoleucine 1192, leucine 1202 to leucine 1246, serine 1272 to isoleucine 1316, leucine 1331 to arginine 1382, and cysteine 1461 to asparagine 1504. One copy of the YD 1 repeat lies at tyrosine 1514 to histidine 1533. Asparagine 1530 and asparagine 1547 each carry an N-linked (GlcNAc...) asparagine glycan. YD repeat units follow at residues tyrosine 1550 to arginine 1570, tyrosine 1588 to threonine 1612, tyrosine 1613 to glutamate 1634, and tyrosine 1635 to histidine 1655. 5 N-linked (GlcNAc...) asparagine glycosylation sites follow: asparagine 1643, asparagine 1679, asparagine 1737, asparagine 1761, and asparagine 1822. YD repeat units follow at residues tyrosine 1825–glutamate 1844, tyrosine 1845–threonine 1865, tyrosine 1866–glutamate 1884, tyrosine 1885–glutamine 1905, tyrosine 1913–aspartate 1929, valine 1930–leucine 1949, tyrosine 1950–threonine 1969, tyrosine 1972–threonine 1992, tyrosine 1995–valine 2015, tyrosine 2065–asparagine 2085, and tyrosine 2093–methionine 2113. Asparagine 2125 carries an N-linked (GlcNAc...) asparagine glycan. YD repeat units lie at residues tyrosine 2133–serine 2153, tyrosine 2154–leucine 2174, tyrosine 2176–glycine 2196, tyrosine 2208–tyrosine 2228, and tyrosine 2230–phenylalanine 2250. Asparagine 2265 is a glycosylation site (N-linked (GlcNAc...) asparagine). YD repeat units follow at residues tyrosine 2276–tyrosine 2293 and tyrosine 2294–isoleucine 2317. Asparagine 2582 carries N-linked (GlcNAc...) asparagine glycosylation.

Belongs to the tenascin family. Teneurin subfamily. In terms of assembly, homodimer; disulfide-linked. Heterodimer with other teneurins. Ten-1 ICD interacts with SORBS1 (via third SH3 domain). Interacts with MBD1 isoform 2. Derives from the plasma membrane form by proteolytic processing. Further proteolytic cleavage may be generated. Post-translationally, derives from the plasma membrane form by proteolytic cleavage and translocates to the nucleus. In terms of tissue distribution, expressed in the neurons of the developing visual system and in fetal brain.

The protein localises to the cell membrane. The protein resides in the nucleus. Its subcellular location is the nucleus speckle. It is found in the nucleus matrix. It localises to the cytoplasm. The protein localises to the cytoskeleton. Involved in neural development, regulating the establishment of proper connectivity within the nervous system. May function as a cellular signal transducer. Its function is as follows. Plays a role in the regulation of neuroplasticity in the limbic system. Mediates a rapid reorganization of actin- and tubulin-based cytoskeleton elements with an increase in dendritic arborization and spine density formation of neurons in the hippocampus and amygdala. Induces BDNF transcription inhibition in neurons. Activates the mitogen-activated protein (MAP) kinase 2 (MEK2) and extracellular signal-regulated kinase (ERK) cascade. Functionally, induces gene transcription activation. The chain is Teneurin-1 (TENM1) from Gallus gallus (Chicken).